Reading from the N-terminus, the 196-residue chain is PRADC1-like protein (196 aa).

The first 18 residues, 1–18 (MLIAWLVLAATLSRSIRA), serve as a signal peptide directing secretion. Residues 73–171 (ITDPPGACQE…STLQRLKRVH (99 aa)) form the PA domain. Residue asparagine 179 is glycosylated (N-linked (GlcNAc...) asparagine).

It localises to the secreted. In terms of biological role, may be involved in iversification of muscle cell fates. This Drosophila melanogaster (Fruit fly) protein is PRADC1-like protein.